We begin with the raw amino-acid sequence, 406 residues long: Fosmidomycin resistance protein (406 aa).

Residues 1-42 (MAMSEQPQPVAGAAASTTKARTSFGILGAISLSHLLNDMIQS) are Periplasmic-facing. Transmembrane regions (helical) follow at residues 43–63 (LILA…MQIG) and 64–84 (MITL…GYWT). Residues 85-102 (DKYPMPWSLPIGMCFTLS) lie on the Periplasmic side of the membrane. A helical transmembrane segment spans residues 103 to 123 (GLVLLALAGSFGAVLLAAALV). Over 124–151 (GTGSSVFHPESSRVARMASGGRHGLAQS) the chain is Cytoplasmic. The helical transmembrane segment at 152 to 172 (IFQVGGNFGSSLGPLLAAVII) threads the bilayer. At 173-177 (APYGK) the chain is on the periplasmic side. A helical transmembrane segment spans residues 178-198 (GNVAWFVLAALLAIVVLAQIS). Over 199–225 (RWYSAQHRMNKGKPKATIINPLPRNKV) the chain is Cytoplasmic. A helical membrane pass occupies residues 226–246 (VLAVSILLILIFSKYFYMASI). Over 247–266 (SSYYTFYLMQKFGLSIQNAQ) the chain is Periplasmic. A helical membrane pass occupies residues 267 to 287 (LHLFAFLFAVAAGTVIGGPVG). Topologically, residues 288–294 (DKIGRKY) are cytoplasmic. A helical membrane pass occupies residues 295-315 (VIWGSILGVAPFTLILPYASL). The Periplasmic segment spans residues 316–319 (HWTG). Residues 320–340 (VLTVIIGFILASAFSAILVYA) form a helical membrane-spanning segment. Residues 341-353 (QELLPGRIGMVSG) are Cytoplasmic-facing. A helical membrane pass occupies residues 354–374 (LFFGFAFGMGGLGAAVLGLIA). The Periplasmic segment spans residues 375-378 (DHTS). Residues 379-399 (IELVYKICAFLPLLGMLTIFL) traverse the membrane as a helical segment. The Cytoplasmic portion of the chain corresponds to 400–406 (PDNRHKD).

Belongs to the major facilitator superfamily.

The protein resides in the cell inner membrane. In terms of biological role, confers the resistance against fosmidomycin. The sequence is that of Fosmidomycin resistance protein (fsr) from Escherichia coli (strain K12).